Here is a 241-residue protein sequence, read N- to C-terminus: Sugar fermentation stimulation protein homolog (241 aa).

It belongs to the SfsA family.

The polypeptide is Sugar fermentation stimulation protein homolog (Nostoc punctiforme (strain ATCC 29133 / PCC 73102)).